The primary structure comprises 660 residues: Galactocerebrosidase (660 aa).

A signal peptide spans 1–18 (MQTHNFLCIISVILGCSA). Substrate is bound by residues threonine 87 and tryptophan 129. Asparagine 147 carries an N-linked (GlcNAc...) asparagine glycan. Asparagine 175 is a binding site for substrate. Glutamate 176 serves as the catalytic Proton donor/acceptor. Glutamate 251 acts as the Nucleophile in catalysis. Cysteine 264 and cysteine 371 are joined by a disulfide. Asparagine 293 and asparagine 356 each carry an N-linked (GlcNAc...) asparagine glycan. Arginine 373 lines the substrate pocket. Residues asparagine 413, asparagine 465, asparagine 495, asparagine 499, asparagine 537, and asparagine 578 are each glycosylated (N-linked (GlcNAc...) asparagine).

This sequence belongs to the glycosyl hydrolase 59 family.

It is found in the lysosome. It carries out the reaction a beta-D-galactosyl-(1&lt;-&gt;1')-N-acylsphing-4-enine + H2O = an N-acylsphing-4-enine + D-galactose. The enzyme catalyses beta-D-galactosyl-(1&lt;-&gt;1)-sphing-4-enine + H2O = sphing-4-enine + D-galactose. It catalyses the reaction a D-galactosylceramide + H2O = an N-acyl-sphingoid base + D-galactose. In terms of biological role, hydrolyzes the galactose ester bonds of glycolipids such as galactosylceramide and galactosylsphingosine. This Danio rerio (Zebrafish) protein is Galactocerebrosidase.